A 1081-amino-acid polypeptide reads, in one-letter code: Dyslexia-associated protein KIAA0319 homolog (1081 aa).

The signal sequence occupies residues 1–22 (MVSPPGVLSSLLLLAAMAGGSS). The region spanning 23-99 (QQCSEGRTYS…PRTTGPIRSY (77 aa)) is the MANSC domain. At 23 to 964 (QQCSEGRTYS…WDGESNCEWS (942 aa)) the chain is on the extracellular side. 3 disordered regions span residues 141–160 (LPFL…SDDY), 168–216 (LQPS…DLTP), and 228–298 (NEST…TTVE). Composition is skewed to polar residues over residues 197 to 209 (ASAT…ASTE), 228 to 253 (NEST…TASP), and 283 to 298 (HNPS…TTVE). PKD domains follow at residues 345–436 (AVSA…VMPA), 444–533 (VAIV…IRGS), 539–629 (VANA…VQAE), 630–723 (NNQA…VKKE), and 729–820 (RAQA…VLPD). Asn430 and Asn522 each carry an N-linked (GlcNAc...) asparagine glycan. A helical membrane pass occupies residues 965-985 (VFYVAALALTLTVLTGAVTWV). The Cytoplasmic segment spans residues 986-1081 (CICCCRRRKR…VSFGYYSKDR (96 aa)). An Endocytosis signal motif is present at residues 1004–1007 (YTIL).

As to quaternary structure, homodimer. Interacts with AP2M1; required for clathrin-mediated endocytosis. N-glycosylated. Post-translationally, O-glycosylated. In terms of processing, shedding of the extracellular domain and intramembrane cleavage produce several proteolytic products. The intramembrane cleavage releases a soluble cytoplasmic polypeptide that translocates to the nucleolus. In terms of tissue distribution, highly expressed during development in ventricular zone, intermediate zone, cortical plate, striatum, hippocampus, and brain stem.

The protein resides in the cell membrane. The protein localises to the early endosome membrane. Its function is as follows. Involved in neuronal migration during development of the cerebral neocortex. May function in a cell autonomous and a non-cell autonomous manner and play a role in appropriate adhesion between migrating neurons and radial glial fibers. May also regulate growth and differentiation of dendrites. The chain is Dyslexia-associated protein KIAA0319 homolog from Rattus norvegicus (Rat).